A 288-amino-acid polypeptide reads, in one-letter code: Glucose uptake protein GlcU (288 aa).

10 helical membrane passes run 4–26 (LIALLPALFWGSVVLINVLVGGG), 33–51 (GTTFGALIIGIILLLTGNA), 56–75 (LTIIIVGLISGAFWALGQGY), 82–104 (LIGVSKTMPISTGLQLVGTTLFS), 114–136 (GVQVTLGLVAMVLLVIGIALTSI), 148–170 (NFGKAMPILLISTVGYVVYVVVA), 180–197 (ALFFQSIGMAIGGLILSA), 206–225 (TLWNLIPGIVWGIGNLFMFY), 230–252 (VGVATSFSFSQLLVIVSTLGGIF), and 264–283 (IGIWAGIVLIVIAPLYSEIL).

The protein belongs to the GRP transporter (TC 2.A.7.5) family.

It is found in the cell membrane. Involved in the uptake of glucose. This chain is Glucose uptake protein GlcU (glcU), found in Staphylococcus xylosus.